We begin with the raw amino-acid sequence, 365 residues long: 3-isopropylmalate dehydrogenase (365 aa).

Residues arginine 96, arginine 106, arginine 134, and aspartate 224 each coordinate substrate. Aspartate 224, aspartate 248, and aspartate 252 together coordinate Mg(2+). NAD(+) is bound at residue 288–300; that stretch reads GSAPTIAKQNIAN.

This sequence belongs to the isocitrate and isopropylmalate dehydrogenases family. LeuB type 1 subfamily. In terms of assembly, homodimer. It depends on Mg(2+) as a cofactor. The cofactor is Mn(2+).

It localises to the cytoplasm. It carries out the reaction (2R,3S)-3-isopropylmalate + NAD(+) = 4-methyl-2-oxopentanoate + CO2 + NADH. Its pathway is amino-acid biosynthesis; L-leucine biosynthesis; L-leucine from 3-methyl-2-oxobutanoate: step 3/4. Functionally, catalyzes the oxidation of 3-carboxy-2-hydroxy-4-methylpentanoate (3-isopropylmalate) to 3-carboxy-4-methyl-2-oxopentanoate. The product decarboxylates to 4-methyl-2 oxopentanoate. In Dehalococcoides mccartyi (strain CBDB1), this protein is 3-isopropylmalate dehydrogenase.